A 327-amino-acid polypeptide reads, in one-letter code: ATPase ASNA1 homolog (327 aa).

26–33 contributes to the ATP binding site; that stretch reads KGGVGKTT. The active site involves Asp57. Residues Glu238 and Asn265 each contribute to the ATP site. Residues Cys274 and Cys277 each coordinate Zn(2+).

This sequence belongs to the arsA ATPase family. Homodimer.

The protein resides in the cytoplasm. It localises to the endoplasmic reticulum. In terms of biological role, ATPase required for the post-translational delivery of tail-anchored (TA) proteins to the endoplasmic reticulum. Recognizes and selectively binds the transmembrane domain of TA proteins in the cytosol. This complex then targets to the endoplasmic reticulum by membrane-bound receptors, where the tail-anchored protein is released for insertion. This process is regulated by ATP binding and hydrolysis. ATP binding drives the homodimer towards the closed dimer state, facilitating recognition of newly synthesized TA membrane proteins. ATP hydrolysis is required for insertion. Subsequently, the homodimer reverts towards the open dimer state, lowering its affinity for the membrane-bound receptor, and returning it to the cytosol to initiate a new round of targeting. In Entamoeba histolytica (strain ATCC 30459 / HM-1:IMSS / ABRM), this protein is ATPase ASNA1 homolog.